A 383-amino-acid chain; its full sequence is GTP-binding protein 10 (383 aa).

One can recognise an Obg domain in the interval 13–148 (GNFIDNLRIY…RIIHLDLKLI (136 aa)). Positions 149–344 (SDVGLVGFPN…LIGCIRKTMD (196 aa)) constitute an OBG-type G domain. GTP is bound by residues 155-162 (GFPNAGKS), 202-206 (DLPGL), and 278-281 (NKMD). Residues 362-383 (LQKETSRTVKRNLKNSPQRTHH) form a disordered region. Over residues 369–383 (TVKRNLKNSPQRTHH) the composition is skewed to basic residues.

The protein belongs to the TRAFAC class OBG-HflX-like GTPase superfamily. OBG GTPase family.

Its subcellular location is the nucleus. The protein localises to the nucleolus. In terms of biological role, may be involved in the ribosome maturation process. This chain is GTP-binding protein 10 (gtpbp10), found in Xenopus tropicalis (Western clawed frog).